Here is an 834-residue protein sequence, read N- to C-terminus: Enhancer of filamentation 1 (834 aa).

The required for interaction with ITCH stretch occupies residues 1-505 (MKYKNLMARA…HQILSQTSHD (505 aa)). In terms of domain architecture, SH3 spans 3 to 65 (YKNLMARALY…PGNRVKLLIG (63 aa)). 7 positions are modified to phosphotyrosine; by ABL1: Y92, Y164, Y166, Y177, Y189, Y214, and Y223. Residues 102 to 229 (RDTIYQVPPS…KGVYAIPPSA (128 aa)) are interacts strongly with spindle-regulatory protein D1M1. The tract at residues 238 to 260 (EKDYDFPPPMRQAGRPDLRPEGV) is disordered. Y279 bears the Phosphotyrosine; by ABL1 mark. Residues 291-316 (ARRHQSLSPNHPPPQLGQSVGSQNDA) form a disordered region. Position 296 is a phosphoserine (S296). Positions 306–315 (LGQSVGSQND) are enriched in polar residues. Y317 is subject to Phosphotyrosine; by ABL1. Disordered stretches follow at residues 328–398 (PPAE…SPAQ) and 560–623 (GPGS…GSER). The segment covering 332–344 (TSEKANPQERDGV) has biased composition (basic and acidic residues). The interacts with CTTN stretch occupies residues 351–834 (NPPDAKGSRD…KRSLLEMATF (484 aa)). A Caspase cleavage related site motif is present at residues 360–363 (DLVD). S369 is modified (phosphoserine). Low complexity predominate over residues 369–395 (SFSSTGSTRSNMSTSSTSSKESSLSAS). The interval 710 to 760 (FYYDQCETHFISLLNAIDALFSCVSSAQPPRIFVAHSKFVILSAHKLVFIG) is divergent helix-loop-helix motif. The segment at 710-834 (FYYDQCETHF…KRSLLEMATF (125 aa)) is required for interaction with PLK1. S780 bears the Phosphoserine; by CSNK1D and CSNK1E mark. T804 bears the Phosphothreonine; by CSNK1E mark.

Belongs to the CAS family. In terms of assembly, homodimer. Forms heterodimers with BCAR1/p130cas. Forms complexes with PTK2B/RAFTK, adapter protein CRKL and LYN kinase. Part of a complex composed of NEDD9, AURKA and CTTN; within the complex NEDD9 acts as a scaffold protein and is required for complex formation. Part of a ternary complex composed of SMAD3, ITCH/AIP4 and NEDD9/HEF1; within the complex NEDD9/HEF1 interacts (via N-terminus) with ITCH/AIP4 (via WW domains); the complex mediates ubiquitination and proteasomal degradation of NEDD9/HEF1. Interacts with SMAD3; the interaction promotes NEDD9 ubiquitination and proteasomal degradation. Interacts with ID2. Interacts with CTTN (via N-terminus). Interacts with MICAL. Interacts with TXNL4/DIM1. Interacts with BCAR3 (via Ras-GEF domain). Interacts with SH2D3C isoform 1 and isoform 2. Interacts with ECT2. Interacts with PTPN11/SHP-2 (via SH2 domains); the interaction is enhanced when NEDD9/CAS-L is tyrosine phosphorylated. Interacts (via C-terminus) with PLK1 (via polo box domains). Interacts with NKX2-5. Interacts with SMAD3; the interaction is inhibited by oxidation of NEDD9. Interacts with NEDD9/HEF1; interaction is induced by CXCL12 promotion of ABL-mediated phosphorylation of NEDD9/HEF1. Interacts (via SH3 domain) with PTK2/FAK. Interacts with FYN; in the presence of PTK2. Interacts with INPPL1/SHIP2. In terms of processing, cell cycle-regulated processing produces four isoforms: p115, p105, p65, and p55. Isoform p115 arises from p105 phosphorylation and appears later in the cell cycle. Isoform p55 arises from p105 as a result of cleavage at a caspase cleavage-related site and it appears specifically at mitosis. The p65 isoform is poorly detected. Post-translationally, polyubiquitinated by ITCH/AIP4, leading to proteasomal degradation. PTK2/FAK1 phosphorylates the protein at the YDYVHL motif (conserved among all cas proteins) following integrin stimulation. The SRC family kinases (FYN, SRC, LCK and CRK) are recruited to the phosphorylated sites and can phosphorylate other tyrosine residues. Ligation of either integrin beta-1 or B-cell antigen receptor on tonsillar B-cells and B-cell lines promotes tyrosine phosphorylation and both integrin and BCR-mediated tyrosine phosphorylation requires an intact actin network. Phosphorylation is required to recruit NEDD9 to T-cell receptor microclusters at the periphery of newly formed immunological synapses. In fibroblasts transformation with oncogene v-ABL results in an increase in tyrosine phosphorylation. Transiently phosphorylated following CD3 cross-linking and this phosphorylated form binds to CRKL and C3G. A mutant lacking the SH3 domain is phosphorylated upon CD3 cross-linking but not upon integrin beta-1 cross-linking. Tyrosine phosphorylation occurs upon stimulation of the G-protein coupled C1a calcitonin receptor. Calcitonin-stimulated tyrosine phosphorylation is mediated by calcium- and protein kinase C-dependent mechanisms and requires the integrity of the actin cytoskeleton. Phosphorylation at Ser-369 induces proteasomal degradation. Phosphorylated by LYN. Phosphorylation at Ser-780 by CSNK1D or CSNK1E, or phosphorylation of Thr-804 by CSNK1E enhances the interaction of NEDD9 with PLK1. Expressed in B-cells (at protein level). Expressed in the respiratory epithelium of the main bronchi to the bronchioles in the lungs (at protein level). High levels detected in kidney, lung, and placenta. Expressed in lymphocytes.

The protein resides in the cytoplasm. It localises to the cell cortex. The protein localises to the nucleus. Its subcellular location is the golgi apparatus. It is found in the cell projection. The protein resides in the lamellipodium. It localises to the cell junction. The protein localises to the focal adhesion. Its subcellular location is the cytoskeleton. It is found in the spindle pole. The protein resides in the cilium. It localises to the cilium basal body. The protein localises to the basolateral cell membrane. Its subcellular location is the spindle. Its function is as follows. Scaffolding protein which plays a central coordinating role for tyrosine-kinase-based signaling related to cell adhesion. As a focal adhesion protein, plays a role in embryonic fibroblast migration. May play an important role in integrin beta-1 or B cell antigen receptor (BCR) mediated signaling in B- and T-cells. Integrin beta-1 stimulation leads to recruitment of various proteins including CRKL and SHPTP2 to the tyrosine phosphorylated form. Promotes adhesion and migration of lymphocytes; as a result required for the correct migration of lymphocytes to the spleen and other secondary lymphoid organs. Plays a role in the organization of T-cell F-actin cortical cytoskeleton and the centralization of T-cell receptor microclusters at the immunological synapse. Negatively regulates cilia outgrowth in polarized cysts. Modulates cilia disassembly via activation of AURKA-mediated phosphorylation of HDAC6 and subsequent deacetylation of alpha-tubulin. Positively regulates RANKL-induced osteoclastogenesis. Required for the maintenance of hippocampal dendritic spines in the dentate gyrus and CA1 regions, thereby involved in spatial learning and memory. The protein is Enhancer of filamentation 1 of Homo sapiens (Human).